Consider the following 302-residue polypeptide: MYYGFDVGGTKIEFGAFNEQLERVATERVATPTDDYAKLVETIAGLVHKYDAQFGVEGTVGLGIPGMEDADNGCVLTVNVPAAKGKPLRADLETKLGRAVKVENDANCFALSEAWDDELKEAASVMGLILGTGFGGGLVYEGKVFSGRNHVAGEIGHMRLPIDAWFHLGEKAPLLGCGCGNKGCMDNYLSGRGFELLYEHYYGEKKKAIDIITAQKEGESKAVEHVERFMELLAICFANIFTANDPHVVVLGGGLSNYDLIYEEMPKRVPKHLLSVAKCPKIVKAKHGDSGGVRGAAFLNIK.

Residues 4–11 and 133–140 contribute to the ATP site; these read GFDVGGTK and GFGGGLVY. Residues His-157, Cys-177, Cys-179, and Cys-184 each contribute to the Zn(2+) site.

The protein belongs to the ROK (NagC/XylR) family. NagK subfamily.

It carries out the reaction N-acetyl-D-glucosamine + ATP = N-acetyl-D-glucosamine 6-phosphate + ADP + H(+). It participates in cell wall biogenesis; peptidoglycan recycling. In terms of biological role, catalyzes the phosphorylation of N-acetyl-D-glucosamine (GlcNAc) derived from cell-wall degradation, yielding GlcNAc-6-P. The sequence is that of N-acetyl-D-glucosamine kinase from Vibrio cholerae serotype O1 (strain ATCC 39315 / El Tor Inaba N16961).